A 486-amino-acid chain; its full sequence is Ribosomal RNA small subunit methyltransferase F (486 aa).

S-adenosyl-L-methionine-binding positions include 124–130 (ASAPGSK), Glu148, Asp175, and Asp193. Residue Cys246 is the Nucleophile of the active site.

The protein belongs to the class I-like SAM-binding methyltransferase superfamily. RsmB/NOP family.

It is found in the cytoplasm. The catalysed reaction is cytidine(1407) in 16S rRNA + S-adenosyl-L-methionine = 5-methylcytidine(1407) in 16S rRNA + S-adenosyl-L-homocysteine + H(+). In terms of biological role, specifically methylates the cytosine at position 1407 (m5C1407) of 16S rRNA. The chain is Ribosomal RNA small subunit methyltransferase F from Shewanella baltica (strain OS185).